Consider the following 134-residue polypeptide: Putative pre-16S rRNA nuclease (134 aa).

It belongs to the YqgF nuclease family.

The protein localises to the cytoplasm. Functionally, could be a nuclease involved in processing of the 5'-end of pre-16S rRNA. The protein is Putative pre-16S rRNA nuclease of Helicobacter pylori (strain G27).